We begin with the raw amino-acid sequence, 1303 residues long: MTVVPGETQCEEAQPAANGSSSPVLLQPFRRPRTDSRSRLDSGSNNTTLSEDCARKSILRTLKSLGVEIDESASFEAIIDSGGIEKLADFWRKRDSSSEIAFQGLLSVLEYCLQHSFDTNEFFEKFVNALGYHTVQFWRAGVPYVFDSDMSHGTKYRDALLFSLTLYDVNTGKSRLKELYAAVPGIRKSLLGVHAKRFGEQYHHLQRRRSVSSRGGSLRGSMDSLNDSGQNGAEDVIGVEDEEEAQKFRGKRTSISLDPAAAGEVMFTIEDGACFPSGGLANTHFQQRVINVSNAPPVSLKREKSGEWEIKQGSGGLVSCVDPIMSVNQENMWLANLGMNIDKKKMLRYDDCLRSQEHTLENMRSTELLNVTDDSAPLAPATNTLGLPLMRQALADVLFHVIADDDIKEQNEDEQSRNVREEMSLLGVLNQYNRSNYKLNPVVVQEQDYNVYYGGISNGLLWPALHNLPEYIVADYDDPKVLYEHWCAYVRVNYQFAIDAVRNSRPQDFIWIHDYHLMLTGMIMQSLDSSLEIGFFLHIPFLPPDNFFTKYRLCAFPIMRGLLRFTKVGFQTHRDRAKFVELVGIHLPTARVTYDEKMDIHTVTYQGWSCSLGVFPVSIKNEDFLKVAQSAETIKKADDIRKEILGETPVDSARLLFSVERFDYTKGIKEKLLAYRRYFERHPDRIGKDVLYQVAVTNRRSVDTYRMYQDECIQMAEDINKEFATDEYPNWKPLIFRTDGLQRADLVAHYLAMDVGVVTPKKDGMNLVAKEMLVCNPSAGLVLSTGAGSEIQFTMAGLHPDDGDKCYHRVVDVYDADHYADAFYEAAVEPEAERAAHGQRLNEFIMNNDIERWSTAFLDPGWSHLVIRQSEIKDLDDFYSLMMRTRDVRRQIVERVLKGIPIRSHFSISLSNAKESLLLACQPGTRTLHLKPSLEEDEQTEPAHFDIANELDEFEKDLNFMKFIQSDDVYNVEQFINSLQEYHPVSADKFRDEVIELGDMLTEADHFNFFFTDRDGTLKSYSCSYPASIQPAYSGVIQAQFARRCAQTCAIVTTAPLMRIGVLDVSTIPEGYYYFGASAGREWFIDPANKFKDQSIPEEDLELLERVFAAISDLLEEPKFKHFTWVGSGLQKHYGHITIAHQDAFNSVPRHQVRAIDQKIKDIIHRIDPDQHTLKVKETETDIKIFLKSESGEIFDKGQGIRLLVEHMKCDISNGTILVCGDSSTDLPMLQACLEANPSGVYTVWVTRSDELKTTVRELCERFGNKNFVFVSCPEVLLGGMAQATIREISIGRPGPRASHDSE.

Disordered stretches follow at residues 1 to 48 (MTVV…NNTT) and 205 to 251 (LQRR…FRGK). A compositionally biased stretch (low complexity) spans 212–221 (SSRGGSLRGS).

In the N-terminal section; belongs to the glycosyltransferase 20 family. The protein in the C-terminal section; belongs to the gob-1 trehalose phosphatase family.

It catalyses the reaction D-glucose 6-phosphate + UDP-alpha-D-glucose = alpha,alpha-trehalose 6-phosphate + UDP + H(+). Catalyzes the production of trehalose from glucose-6-phosphate and UDP-alpha-D-glucose in a 2 step process. The chain is Alpha,alpha-trehalose-phosphate synthase [UDP-forming] 2 (tps-2) from Aphelenchoides avenae (Mycophagous nematode worm).